The sequence spans 384 residues: MTNSSSTSTSSTTGGSLLLLCEEEESWAGRRIPVSLLYSGLAIGGTLANGMVIYLVSSFRKLQTTSNAFIVNGCAADLSVCALWMPQEAVLGLLPTGSAEPPADWDGAGGSYRLLRGGLLGLGLTVSLLSHCLVALNRYLLITRAPATYQALYQRRHTAGMLALSWALALGLVLLLPPWAPRPGAAPPRVHYPALLAAAALLAQTALLLHCYLGIVRRVRVSVKRVSVLNFHLLHQLPGCAAAAAAFPGAQHAPGPGGAAHPAQAQPLPPALHPRRAQRRLSGLSVLLLCCVFLLATQPLVWVSLASGFSLPVPWGVQAASWLLCCALSALNPLLYTWRNEEFRRSVRSVLPGVGDAAAAAVAATAVPAVSQAQLGTRAAGQHW.

Topologically, residues 1-35 (MTNSSSTSTSSTTGGSLLLLCEEEESWAGRRIPVS) are extracellular. N-linked (GlcNAc...) asparagine glycosylation occurs at Asn3. Residues 36-56 (LLYSGLAIGGTLANGMVIYLV) form a helical membrane-spanning segment. Residues 57–73 (SSFRKLQTTSNAFIVNG) are Cytoplasmic-facing. A helical membrane pass occupies residues 74 to 94 (CAADLSVCALWMPQEAVLGLL). The Extracellular portion of the chain corresponds to 95-116 (PTGSAEPPADWDGAGGSYRLLR). The chain crosses the membrane as a helical span at residues 117 to 136 (GGLLGLGLTVSLLSHCLVAL). The Cytoplasmic portion of the chain corresponds to 137–158 (NRYLLITRAPATYQALYQRRHT). The helical transmembrane segment at 159-179 (AGMLALSWALALGLVLLLPPW) threads the bilayer. Residues 180-195 (APRPGAAPPRVHYPAL) are Extracellular-facing. Residues 196 to 216 (LAAAALLAQTALLLHCYLGIV) traverse the membrane as a helical segment. The Cytoplasmic segment spans residues 217–285 (RRVRVSVKRV…RAQRRLSGLS (69 aa)). The chain crosses the membrane as a helical span at residues 286–306 (VLLLCCVFLLATQPLVWVSLA). At 307–310 (SGFS) the chain is on the extracellular side. The helical transmembrane segment at 311 to 331 (LPVPWGVQAASWLLCCALSAL) threads the bilayer. Topologically, residues 332–384 (NPLLYTWRNEEFRRSVRSVLPGVGDAAAAAVAATAVPAVSQAQLGTRAAGQHW) are cytoplasmic.

Belongs to the G-protein coupled receptor 1 family. As to expression, expressed predominantly in the striatum.

It is found in the cell membrane. Its subcellular location is the cell projection. The protein resides in the cilium membrane. It localises to the cytoplasm. The protein localises to the nucleus. Orphan G protein-coupled receptor implicated in a large repertoire of behavioral responses that engage motor activities, spatial learning, and emotional processing. May play a role in the regulation of cognitive and motor function. Couples with the heterotrimeric G protein complex of the G(i) subfamily, consisting of GNAI1, GNB1 and GNG2, thereby acting through a G(i)-mediated pathway. Plays a role in the attenuation of D1 dopamine receptor (D1R)-mediated cAMP response in ciliated cells. In non-ciliated cells, involved in the inhibition of the beta-2 adrenergic receptor (B2AR) response. In Homo sapiens (Human), this protein is G protein-coupled receptor 88 (GPR88).